The primary structure comprises 535 residues: uncharacterized protein (535 aa).

The chain crosses the membrane as a helical span at residues 17 to 37; it reads IVLLCMIGFFCTTFMRIHFAL. N-linked (GlcNAc...) asparagine glycosylation is found at asparagine 44 and asparagine 61. A run of 6 helical transmembrane segments spans residues 107–127, 144–164, 167–187, 199–219, 225–245, and 292–312; these read LIFS…MFFI, ILVT…SVFL, IGMG…IGNW, IFTL…AAVC, WPAT…LWFF, and AFLG…LFQI. Residue asparagine 329 is glycosylated (N-linked (GlcNAc...) asparagine). The next 5 membrane-spanning stretches (helical) occupy residues 331-351, 368-388, 395-415, 429-451, and 463-483; these read TFTA…GIGI, VSHG…AFFV, TGLI…SGFY, MSAI…MSMF, and IFIG…LFGS.

This sequence belongs to the major facilitator superfamily. Sodium/anion cotransporter family.

It is found in the membrane. This is an uncharacterized protein from Caenorhabditis elegans.